We begin with the raw amino-acid sequence, 85 residues long: U4-theraphotoxin-Hhn1a (85 aa).

The signal sequence occupies residues 1 to 22 (MKVTLIAILTCAAVLVLHTTAA). A propeptide spanning residues 23 to 48 (EELEAESQLMEVGMPDTELEAVDEER) is cleaved from the precursor. 3 disulfides stabilise this stretch: cysteine 52–cysteine 66, cysteine 56–cysteine 77, and cysteine 71–cysteine 82.

It belongs to the neurotoxin 12 (Hwtx-2) family. 02 (Hwtx-2) subfamily. Monomer. In terms of tissue distribution, expressed by the venom gland.

The protein localises to the secreted. In terms of biological role, neurotoxin active on both insects and mammals. In Cyriopagopus hainanus (Chinese bird spider), this protein is U4-theraphotoxin-Hhn1a.